Consider the following 387-residue polypeptide: MIAPRLSMPAIVNAQSLVAKLRQLNCEKNYCHPNNLPGFTASAFYKESSSPLDQLVQTARLCHWLLSQLGISVQGVSEFDDPIAISTDLLVACKDIVNVANIPPHRIRMGYGDDLTALVLGIADACLAKLQPNIVSWKSLGSENANAGVERDNDDDDAPILDDLIVDDALIGTMTAKKGTFTTAAGLATGSLTTDSGCIAPGLISEADWEQELMAVDSQLGGKQLGGVYAGQDWRKDVVSMSLLAKALSKETGSCAQSISGLVTDFGKQLERISTREQHLNSQVGQYSAKLGDANRTHAGVTEELAELSQSISALTGELSTINEKLRALKVELQVESARASDTSNIHIVKTAFSSLSGEIRQLDLRITLAQQRLFSIAPPEPNTVRI.

It belongs to the IFT57 family.

Its subcellular location is the cell projection. It is found in the cilium. The protein localises to the flagellum. It localises to the cytoplasm. The protein resides in the cytoskeleton. Its subcellular location is the flagellum axoneme. It is found in the flagellum basal body. Component of the intraflagellar transport complex B (IFT-B) involved in flagellar assembly. The polypeptide is Intraflagellar transport protein 57 (Giardia intestinalis (strain ATCC 50803 / WB clone C6) (Giardia lamblia)).